A 347-amino-acid chain; its full sequence is Extracellular metalloprotease (347 aa).

The first 20 residues, 1–20 (MKSRPICSVIPPYILHRIIA), serve as a signal peptide directing secretion. Positions 43–68 (SHHPRPEPHEKLPAGQANRSIHDAEQ) are disordered. Position 162 (histidine 162) interacts with Zn(2+). Glutamate 163 is a catalytic residue. The Zn(2+) site is built by histidine 166 and glutamate 186. The active-site Proton donor is the histidine 264.

Belongs to the peptidase M4 family. The cofactor is Ca(2+). Zn(2+) serves as cofactor.

Its subcellular location is the secreted. The polypeptide is Extracellular metalloprotease (prt1) (Pectobacterium carotovorum subsp. carotovorum (Erwinia carotovora subsp. carotovora)).